Here is a 257-residue protein sequence, read N- to C-terminus: Hydroxyacylglutathione hydrolase (257 aa).

Zn(2+) contacts are provided by H58, H60, D62, H63, H116, D135, and H173.

It belongs to the metallo-beta-lactamase superfamily. Glyoxalase II family. Monomer. The cofactor is Zn(2+).

The enzyme catalyses an S-(2-hydroxyacyl)glutathione + H2O = a 2-hydroxy carboxylate + glutathione + H(+). Its pathway is secondary metabolite metabolism; methylglyoxal degradation; (R)-lactate from methylglyoxal: step 2/2. Functionally, thiolesterase that catalyzes the hydrolysis of S-D-lactoyl-glutathione to form glutathione and D-lactic acid. The protein is Hydroxyacylglutathione hydrolase of Brucella melitensis biotype 1 (strain ATCC 23456 / CCUG 17765 / NCTC 10094 / 16M).